The following is a 382-amino-acid chain: Neuropeptide Y receptor type 1 (382 aa).

The Extracellular segment spans residues 1 to 33 (MNSTLFSRVENYSVHYNVSENSPFLAFENDDCH). Residues asparagine 2, asparagine 11, and asparagine 17 are each glycosylated (N-linked (GlcNAc...) asparagine). Residues 34-54 (LPLAVIFTLALAYGAVIILGV) traverse the membrane as a helical segment. The Cytoplasmic segment spans residues 55-75 (SGNLALIIIILKQKEMRNVTN). The chain crosses the membrane as a helical span at residues 76-96 (ILIVNLSFSDLLVAVMCLPFT). Over 97–115 (FVYTLMDHWVFGETMCKLN) the chain is Extracellular. A disulfide bridge connects residues cysteine 112 and cysteine 197. Residues 116–136 (PFVQCVSITVSIFSLVLIAVE) form a helical membrane-spanning segment. The Cytoplasmic segment spans residues 137 to 153 (RHQLIINPRGWRPNNRH). Residues 154-174 (AYIGITVIWVLAVASSLPFVI) traverse the membrane as a helical segment. The Extracellular portion of the chain corresponds to 175–210 (YQILTDEPFQNVSLAAFKDKYVCFDKFPSDSHRLSY). The chain crosses the membrane as a helical span at residues 211–231 (TTLLLVLQYFGPLCFIFICYF). At 232 to 259 (KIYIRLKRRNNMMDKIRDSKYRSSETKR) the chain is on the cytoplasmic side. Residues 260–280 (INVMLLSIVVAFAVCWLPLTI) traverse the membrane as a helical segment. At 281-298 (FNTVFDWNHQIIATCNHN) the chain is on the extracellular side. A helical membrane pass occupies residues 299–319 (LLFLLCHLTAMISTCVNPIFY). At 320 to 382 (GFLNKNFQRD…KISMNDNEKI (63 aa)) the chain is on the cytoplasmic side. Residue cysteine 337 is the site of S-palmitoyl cysteine attachment. A phosphoserine mark is found at serine 367 and serine 375.

This sequence belongs to the G-protein coupled receptor 1 family. In terms of tissue distribution, brain.

It localises to the cell membrane. Functionally, receptor for neuropeptide Y and peptide YY. The protein is Neuropeptide Y receptor type 1 (Npy1r) of Rattus norvegicus (Rat).